Consider the following 2473-residue polypeptide: Neurogenic locus notch homolog protein 2 (2473 aa).

An N-terminal signal peptide occupies residues 1 to 25 (MPALRPAALRALLWLWLCGAGPAHA). EGF-like domains follow at residues 26–63 (LQCR…EYCQ), 64–102 (HRDP…EDCQ), 105–143 (TSHP…KQCQ), and 144–180 (WTDA…QKCE). The Extracellular portion of the chain corresponds to 26-1679 (LQCRGGQEPC…SELESPRNAQ (1654 aa)). 83 disulfide bridges follow: Cys28/Cys41, Cys35/Cys51, Cys53/Cys62, Cys68/Cys79, Cys73/Cys90, Cys92/Cys101, Cys109/Cys121, Cys115/Cys131, Cys133/Cys142, Cys148/Cys159, Cys153/Cys168, Cys170/Cys179, Cys186/Cys198, Cys192/Cys207, Cys209/Cys218, Cys230/Cys246, Cys248/Cys257, Cys264/Cys275, Cys269/Cys284, Cys286/Cys295, Cys302/Cys315, Cys309/Cys324, Cys326/Cys335, Cys342/Cys353, Cys347/Cys362, Cys364/Cys373, Cys379/Cys390, Cys384/Cys401, Cys403/Cys412, Cys419/Cys433, Cys427/Cys442, Cys444/Cys453, Cys460/Cys471, Cys465/Cys480, Cys482/Cys491, Cys498/Cys509, Cys503/Cys518, Cys520/Cys529, Cys536/Cys547, Cys541/Cys556, Cys558/Cys567, Cys574/Cys584, Cys579/Cys593, Cys595/Cys604, Cys611/Cys622, Cys616/Cys631, Cys633/Cys642, Cys649/Cys659, Cys654/Cys668, Cys670/Cys679, Cys686/Cys697, Cys691/Cys706, Cys708/Cys717, Cys724/Cys734, Cys729/Cys743, Cys745/Cys754, Cys761/Cys772, Cys766/Cys781, Cys783/Cys792, Cys799/Cys810, Cys804/Cys819, Cys821/Cys830, Cys837/Cys848, Cys842/Cys859, Cys861/Cys870, Cys877/Cys888, Cys882/Cys897, Cys899/Cys908, Cys915/Cys926, Cys920/Cys935, Cys937/Cys946, Cys953/Cys964, Cys958/Cys973, Cys975/Cys984, Cys991/Cys1002, Cys996/Cys1011, Cys1013/Cys1022, Cys1029/Cys1040, Cys1034/Cys1049, Cys1051/Cys1060, Cys1067/Cys1078, Cys1072/Cys1087, and Cys1089/Cys1098. Asn46 carries N-linked (GlcNAc...) asparagine glycosylation. A glycan (N-linked (GlcNAc...) asparagine) is linked at Asn155. The EGF-like 5; calcium-binding domain maps to 182 to 219 (DINECDIPGRCQHGGTCLNLPGSYRCQCPQGFTGQHCD). In terms of domain architecture, EGF-like 6; incomplete spans 221–258 (PYVPCAPSPCVNGGTCRQTGDFTFECNCLPGFEGSTCE). Residues 260–296 (NIDDCPNHKCQNGGVCVDGVNTYNCRCPPQWTGQFCT) enclose the EGF-like 7; calcium-binding domain. Residues 298–336 (DVDECLLQPNACQNGGTCTNRNGGYGCVCVNGWSGDDCS) enclose the EGF-like 8; calcium-binding domain. Positions 338–374 (NIDDCAYASCTPGSTCIDRVASFSCLCPEGKAGLLCH) constitute an EGF-like 9; calcium-binding domain. In terms of domain architecture, EGF-like 10 spans 375–413 (LDDACISNPCHKGALCDTNPLNGQYICTCPQGYKGADCT). The 40-residue stretch at 415–454 (DVDECAMANSNPCEHAGKCVNTDGAFHCECLKGYAGPRCE) folds into the EGF-like 11; calcium-binding domain. Positions 456–492 (DINECHSDPCQNDATCLDKIGGFTCLCMPGFKGVHCE) constitute an EGF-like 12; calcium-binding domain. Positions 494–530 (EVNECQSNPCVNNGQCVDKVNRFQCLCPPGFTGPVCQ) constitute an EGF-like 13; calcium-binding domain. The EGF-like 14; calcium-binding domain occupies 532–568 (DIDDCSSTPCLNGAKCIDHPNGYECQCATGFTGILCD). Residues 570 to 605 (NIDNCDPDPCHHGQCQDGIDSYTCICNPGYMGAICS) enclose the EGF-like 15; calcium-binding domain. The region spanning 607–643 (QIDECYSSPCLNDGRCIDLVNGYQCNCQPGTSGLNCE) is the EGF-like 16; calcium-binding domain. Residue Ser613 is glycosylated (O-linked (Glc...) serine; alternate). O-linked (Xyl...) serine; alternate glycosylation occurs at Ser613. Residues 645–680 (NFDDCASNPCMHGVCVDGINRYSCVCSPGFTGQRCN) enclose the EGF-like 17; calcium-binding domain. The EGF-like 18; calcium-binding domain maps to 682–718 (DIDECASNPCRKGATCINDVNGFRCICPEGPHHPSCY). Positions 720–755 (QVNECLSNPCIHGNCTGGLSGYKCLCDAGWVGVNCE) constitute an EGF-like 19 domain. Asn733 carries N-linked (GlcNAc...) asparagine glycosylation. The region spanning 757 to 793 (DKNECLSNPCQNGGTCNNLVNGYRCTCKKGFKGYNCQ) is the EGF-like 20; calcium-binding domain. The EGF-like 21; calcium-binding domain maps to 795-831 (NIDECASNPCLNQGTCFDDVSGYTCHCMLPYTGKNCQ). Residues 833–871 (VLAPCSPNPCENAAVCKEAPNFESFSCLCAPGWQGKRCT) enclose the EGF-like 22 domain. Residues 873-909 (DVDECISKPCMNNGVCHNTQGSYVCECPPGFSGMDCE) form the EGF-like 23; calcium-binding domain. The EGF-like 24; calcium-binding domain maps to 911–947 (DINDCLANPCQNGGSCVDHVNTFSCQCHPGFIGDKCQ). In terms of domain architecture, EGF-like 25; calcium-binding spans 949–985 (DMNECLSEPCKNGGTCSDYVNSYTCTCPAGFHGVHCE). Residues 987 to 1023 (NIDECTESSCFNGGTCVDGINSFSCLCPVGFTGPFCL) form the EGF-like 26; calcium-binding domain. An EGF-like 27; calcium-binding domain is found at 1025-1061 (DINECSSNPCLNAGTCVDGLGTYRCICPLGYTGKNCQ). EGF-like domains are found at residues 1063 to 1099 (LVNL…AYCD) and 1101 to 1147 (LNVS…SYCE). An N-linked (GlcNAc...) asparagine glycan is attached at Asn1102. Disulfide bonds link Cys1105–Cys1126, Cys1120–Cys1135, Cys1137–Cys1146, Cys1153–Cys1164, Cys1158–Cys1173, Cys1175–Cys1184, Cys1191–Cys1202, Cys1196–Cys1211, Cys1213–Cys1222, Cys1229–Cys1241, Cys1235–Cys1250, Cys1252–Cys1261, Cys1268–Cys1281, Cys1273–Cys1290, Cys1292–Cys1301, Cys1308–Cys1319, Cys1313–Cys1331, Cys1333–Cys1346, Cys1378–Cys1389, Cys1383–Cys1400, Cys1402–Cys1411, Cys1425–Cys1448, Cys1430–Cys1443, and Cys1439–Cys1455. The EGF-like 30; calcium-binding domain occupies 1149-1185 (QLDECASNPCQHGATCNDFIGGYRCECVPGYQGVNCE). Residues 1187–1223 (EVDECQNQPCQNGGTCIDLVNHFKCSCPPGTRGLLCE) form the EGF-like 31; calcium-binding domain. An EGF-like 32; calcium-binding domain is found at 1225 to 1262 (NIDECAGGPHCLNGGQCVDRIGGYTCRCLPGFAGERCE). EGF-like domains lie at 1264 to 1302 (DINE…RHCE), 1304 to 1343 (FLDV…ARCQ), and 1375 to 1412 (ESGC…SHCE). 3 LNR repeats span residues 1425–1465 (CQSQ…PWAN), 1466–1502 (CTST…NSKT), and 1503–1544 (CKYD…NLAE). A negative regulatory region (NRR) region spans residues 1425-1679 (CQSQYCADKA…SELESPRNAQ (255 aa)). N-linked (GlcNAc...) asparagine glycosylation occurs at Asn1465. 7 cysteine pairs are disulfide-bonded: Cys1466–Cys1489, Cys1472–Cys1484, Cys1480–Cys1496, Cys1503–Cys1527, Cys1509–Cys1522, Cys1518–Cys1534, and Cys1634–Cys1641. The helical transmembrane segment at 1680-1700 (LLYLLAVAVVIILFFILLGVI) threads the bilayer. Over 1701 to 2473 (MAKRKRKHGF…PPHSNMQVYA (773 aa)) the chain is Cytoplasmic. The residue at position 1718 (Thr1718) is a Phosphothreonine. The tract at residues 1755–1778 (GTSEHWVDDEGPQPKKAKAEDEAL) is disordered. Ser1780 carries the post-translational modification Phosphoserine. At Thr1803 the chain carries Phosphothreonine. A Phosphoserine modification is found at Ser1805. Thr1809 is subject to Phosphothreonine. ANK repeat units follow at residues 1828–1872 (DGCT…SLQA), 1877–1906 (TGEM…DANA), 1910–1940 (MGRC…DLDA), 1944–1973 (DGTT…DVNA), 1977–2006 (HGKS…NRDM), and 2010–2039 (KEET…NRDI). Phosphoserine occurs at positions 1843 and 1846. Phosphoserine is present on residues Ser2071, Ser2079, and Ser2082. Thr2098 carries the post-translational modification Phosphothreonine. Disordered regions lie at residues 2098 to 2117 (TPMG…PTSL), 2122 to 2169 (KEAK…TSSP), and 2382 to 2473 (VGKY…QVYA). Residues 2099-2108 (PMGKKARRPN) show a composition bias toward basic residues. Composition is skewed to polar residues over residues 2140 to 2151 (VQLSESSVTLSP) and 2390 to 2400 (SQHSYASSNAA). The span at 2419–2446 (PSPESPDQWSSSSPHSASDWSDVTTSPT) shows a compositional bias: low complexity. Over residues 2447–2456 (PGGGGGGQRG) the composition is skewed to gly residues.

The protein belongs to the NOTCH family. As to quaternary structure, heterodimer of a C-terminal fragment N(TM) and an N-terminal fragment N(EC) which are probably linked by disulfide bonds. Interacts with MAML1, MAML2 and MAML3 which act as transcriptional coactivators for NOTCH2. Interacts with RELA/p65. Interacts with HIF1AN. Interacts (via ANK repeats) with TCIM, the interaction inhibits the nuclear translocation of NOTCH2 N2ICD. Interacts with CUL1, RBX1, SKP1 and FBXW7 that are SCF(FBXW7) E3 ubiquitin-protein ligase complex components. Interacts with MINAR1; this interaction increases MINAR1 stability and function. Interacts with MDK; this interaction mediates a nuclear accumulation of NOTCH2 and therefore activation of NOTCH2 signaling leading to interaction between HES1 and STAT3. Interacts with MINAR2. In terms of processing, synthesized in the endoplasmic reticulum as an inactive form which is proteolytically cleaved by a furin-like convertase in the trans-Golgi network before it reaches the plasma membrane to yield an active, ligand-accessible form. Cleavage results in a C-terminal fragment N(TM) and a N-terminal fragment N(EC). Following ligand binding, it is cleaved by TNF-alpha converting enzyme (TACE) to yield a membrane-associated intermediate fragment called notch extracellular truncation (NEXT). This fragment is then cleaved by presenilin dependent gamma-secretase to release a notch-derived peptide containing the intracellular domain (NICD) from the membrane. Hydroxylated by HIF1AN. Post-translationally, can be either O-glucosylated or O-xylosylated at Ser-613 by POGLUT1. In terms of processing, phosphorylated by GSK3. GSK3-mediated phosphorylation is necessary for NOTCH2 recognition by FBXW7, ubiquitination and degradation via the ubiquitin proteasome pathway. In terms of tissue distribution, expressed in the brain, liver, kidney, neuroepithelia, somites, optic vesicles and branchial arches, but not heart.

Its subcellular location is the cell membrane. The protein resides in the nucleus. It is found in the cytoplasm. Its function is as follows. Functions as a receptor for membrane-bound ligands Jagged-1 (JAG1), Jagged-2 (JAG2) and Delta-1 (DLL1) to regulate cell-fate determination. Upon ligand activation through the released notch intracellular domain (NICD) it forms a transcriptional activator complex with RBPJ/RBPSUH and activates genes of the enhancer of split locus. Affects the implementation of differentiation, proliferation and apoptotic programs. May play an essential role in postimplantation development, probably in some aspect of cell specification and/or differentiation. In collaboration with RELA/p65 enhances NFATc1 promoter activity and positively regulates RANKL-induced osteoclast differentiation. Positively regulates self-renewal of liver cancer cells. This is Neurogenic locus notch homolog protein 2 from Mus musculus (Mouse).